Reading from the N-terminus, the 352-residue chain is S-adenosylmethionine:tRNA ribosyltransferase-isomerase (352 aa).

The protein belongs to the QueA family. As to quaternary structure, monomer.

Its subcellular location is the cytoplasm. The enzyme catalyses 7-aminomethyl-7-carbaguanosine(34) in tRNA + S-adenosyl-L-methionine = epoxyqueuosine(34) in tRNA + adenine + L-methionine + 2 H(+). It participates in tRNA modification; tRNA-queuosine biosynthesis. Its function is as follows. Transfers and isomerizes the ribose moiety from AdoMet to the 7-aminomethyl group of 7-deazaguanine (preQ1-tRNA) to give epoxyqueuosine (oQ-tRNA). In Gloeobacter violaceus (strain ATCC 29082 / PCC 7421), this protein is S-adenosylmethionine:tRNA ribosyltransferase-isomerase.